A 443-amino-acid chain; its full sequence is MKIGIINTKIRTVFSAFACMIAASLVCTMPARAVVEININKGVIEPLPIAITDFLSADQLGSNITSVIAADLERSGLFAPIDKGAFIEKISNPDAAPRFEDWKVINAQALVTGRITKQPDGRLKAEFRLWDTFGGQQMIGQQFFTTPDNWRRVAHIIADAIYERLTGDKGYFDTRVVFVDESGPAQKRVKRLAIMDQDGANVRFISDGRALSLTPRFSPNWQEVTYMSFEGGSPKVYLLQLETGQRELVGNFPGMTIAPRFSPDGQKVVMSLLQDDGSANIYTMDLRNRTTTRLTSSQAIDTGASYSPDGSQIVFTSDRGGRPQLYVMGADGSNPRRISMGDGSYSTPVWSPRGDLIAFTKQSQGQFSIGVMKTDGSGERLLTSGFHNEGPTWAPNGRVLMFFRKAAGAGGPKLFTIDLTGRNERQIQTPNFASDPAWSPLLE.

An N-terminal signal peptide occupies residues 1–33; that stretch reads MKIGIINTKIRTVFSAFACMIAASLVCTMPARA.

The protein belongs to the TolB family. In terms of assembly, the Tol-Pal system is composed of five core proteins: the inner membrane proteins TolA, TolQ and TolR, the periplasmic protein TolB and the outer membrane protein Pal. They form a network linking the inner and outer membranes and the peptidoglycan layer.

It localises to the periplasm. Part of the Tol-Pal system, which plays a role in outer membrane invagination during cell division and is important for maintaining outer membrane integrity. The polypeptide is Tol-Pal system protein TolB (Brucella ovis (strain ATCC 25840 / 63/290 / NCTC 10512)).